The chain runs to 166 residues: Short form salivary protein D7R5 (166 aa).

The first 22 residues, 1-22, serve as a signal peptide directing secretion; that stretch reads MEWRYFVVIALICPLIIVETLA. Intrachain disulfides connect Cys26/Cys58, Cys39/Cys166, and Cys98/Cys117.

Belongs to the PBP/GOBP family.

It is found in the secreted. Its function is as follows. In contrast to the related D7 salivary proteins, does not bind biogenic amines such as serotonin, noradrenaline, histamine and adrenaline. It is hypothesized that either D7r5 evolved an as yet unknown function or is becoming a pseudogene. The protein is Short form salivary protein D7R5 of Anopheles gambiae (African malaria mosquito).